We begin with the raw amino-acid sequence, 744 residues long: Zinc finger protein 483 (744 aa).

Residues 52-134 (RQRFRWFCYS…TLIEDLTQML (83 aa)) form the SCAN box domain. The disordered stretch occupies residues 137 to 156 (KDPVSQDSTVSQEENSKEDK). The KRAB domain maps to 170 to 241 (ITLKDVAVNF…EEVSKSSRLD (72 aa)). 2 disordered regions span residues 263 to 308 (ESQQ…SPFG) and 350 to 385 (KEKT…KIHL). The segment covering 277-293 (NQGNSKGRVAQNKTLGS) has biased composition (polar residues). Basic and acidic residues-rich tracts occupy residues 298–308 (KKFDPDKSPFG) and 350–363 (KEKT…KSND). 11 consecutive C2H2-type zinc fingers follow at residues 439 to 461 (HKCS…RRIH), 467 to 489 (YMCN…HRTH), 495 to 517 (FKCD…QRIH), 523 to 545 (YKCK…QRIH), 551 to 573 (YTCS…QRIH), 579 to 601 (YKCG…QRIH), 607 to 629 (YLCN…QRLH), 635 to 657 (YKCN…QRIH), 663 to 685 (YKCK…HRIH), 691 to 713 (YECN…LKIH), and 719 to 741 (YECN…RGFH).

It belongs to the krueppel C2H2-type zinc-finger protein family.

The protein localises to the nucleus. In terms of biological role, may be involved in transcriptional regulation. This chain is Zinc finger protein 483 (ZNF483), found in Homo sapiens (Human).